The following is a 246-amino-acid chain: 3-deoxy-manno-octulosonate cytidylyltransferase (246 aa).

The protein belongs to the KdsB family.

Its subcellular location is the cytoplasm. The enzyme catalyses 3-deoxy-alpha-D-manno-oct-2-ulosonate + CTP = CMP-3-deoxy-beta-D-manno-octulosonate + diphosphate. Its pathway is nucleotide-sugar biosynthesis; CMP-3-deoxy-D-manno-octulosonate biosynthesis; CMP-3-deoxy-D-manno-octulosonate from 3-deoxy-D-manno-octulosonate and CTP: step 1/1. The protein operates within bacterial outer membrane biogenesis; lipopolysaccharide biosynthesis. In terms of biological role, activates KDO (a required 8-carbon sugar) for incorporation into bacterial lipopolysaccharide in Gram-negative bacteria. The protein is 3-deoxy-manno-octulosonate cytidylyltransferase of Rickettsia conorii (strain ATCC VR-613 / Malish 7).